Here is a 319-residue protein sequence, read N- to C-terminus: 4-diphosphocytidyl-2-C-methyl-D-erythritol kinase (319 aa).

The active site involves Lys-21. An ATP-binding site is contributed by Pro-106 to Ser-116. Residue Asp-148 is part of the active site.

Belongs to the GHMP kinase family. IspE subfamily.

It catalyses the reaction 4-CDP-2-C-methyl-D-erythritol + ATP = 4-CDP-2-C-methyl-D-erythritol 2-phosphate + ADP + H(+). The protein operates within isoprenoid biosynthesis; isopentenyl diphosphate biosynthesis via DXP pathway; isopentenyl diphosphate from 1-deoxy-D-xylulose 5-phosphate: step 3/6. In terms of biological role, catalyzes the phosphorylation of the position 2 hydroxy group of 4-diphosphocytidyl-2C-methyl-D-erythritol. This chain is 4-diphosphocytidyl-2-C-methyl-D-erythritol kinase, found in Prochlorococcus marinus (strain MIT 9303).